Here is a 331-residue protein sequence, read N- to C-terminus: MLTLAKIALISSLFISLPFARPQKQNPRRNVTQHTIEDVKIMRNNSIHLERSINVTSENGSDISNLMVTTPSPLNLSTTFRTTNSTRTWLMTSSSESSRPSSTYSVPPLVQGFVSKLPLNSSTADANPLQVSEHSNSTNSPSPENFTWSLDNDTMNSPEDISTTVRPFPPPPKTTPVTPFTAEPTEWLPTNNDNFAGFTPYQEKTTLQPTLKFTNNSKLFPNTSDTPKENKNTGIVFGAILGAILGASLLSLVGYLLCGQRKTDSFSHRRLYDDRNEPVLRLDNAPEPYDVNFGNSSYYNPAVSDSSMPEGGESLQDGIPMDAIPPLRPSI.

Positions 1–22 (MLTLAKIALISSLFISLPFARP) are cleaved as a signal peptide. Residues 23 to 233 (QKQNPRRNVT…SDTPKENKNT (211 aa)) are Extracellular-facing. N-linked (GlcNAc...) asparagine glycans are attached at residues N30, N44, N54, N59, N75, N84, N120, N136, N145, N152, N215, and N222. The span at 124-162 (ADANPLQVSEHSNSTNSPSPENFTWSLDNDTMNSPEDIS) shows a compositional bias: polar residues. The segment at 124–186 (ADANPLQVSE…VTPFTAEPTE (63 aa)) is disordered. A helical transmembrane segment spans residues 234-254 (GIVFGAILGAILGASLLSLVG). Residues 255-331 (YLLCGQRKTD…DAIPPLRPSI (77 aa)) lie on the Cytoplasmic side of the membrane. The segment at 302-331 (AVSDSSMPEGGESLQDGIPMDAIPPLRPSI) is disordered.

Highly glycosylated (N- and O-linked carbohydrates).

The protein resides in the membrane. The sequence is that of Mucin-15 (Muc15) from Mus musculus (Mouse).